The following is a 97-amino-acid chain: MPSQMEHAMETMMFTFHKFAGDKGYLTKEDLRVLMEKEFPGFLENQKDPLAVDKIMKDLDQCRDGKVGFQSFFSLIAGLTIACNDYFVVHMKQKGKK.

An N6-acetyllysine mark is found at Lys23 and Lys28. The residue at position 37 (Lys37) is an N6-acetyllysine; alternate. Lys37 is covalently cross-linked (Glycyl lysine isopeptide (Lys-Gly) (interchain with G-Cter in SUMO2); alternate). Residues Lys54 and Lys57 each carry the N6-acetyllysine modification. The tract at residues Asp60–Ser71 is ancestral calcium site.

This sequence belongs to the S-100 family. Heterotetramer containing 2 light chains of S100A10/p11 and 2 heavy chains of ANXA2/p36. Interacts with SCN10A. Interacts with TASOR.

Functionally, because S100A10 induces the dimerization of ANXA2/p36, it may function as a regulator of protein phosphorylation in that the ANXA2 monomer is the preferred target (in vitro) of tyrosine-specific kinase. The polypeptide is Protein S100-A10 (S100A10) (Bos taurus (Bovine)).